Here is a 313-residue protein sequence, read N- to C-terminus: Adhesin MafA 2/3 (313 aa).

The signal sequence occupies residues 1–14; sequence MKTLLLLIPLVLTA. Residue cysteine 15 is the site of N-palmitoyl cysteine attachment. Cysteine 15 is lipidated: S-diacylglycerol cysteine. Positions 282–298 are enriched in polar residues; that stretch reads GDTTAQNRPDFKQNNGK. Positions 282-313 are disordered; sequence GDTTAQNRPDFKQNNGKNPDVGNEVIRRRKGG.

The protein belongs to the MafA family.

The protein resides in the cell outer membrane. This is Adhesin MafA 2/3 (mafA2) from Neisseria gonorrhoeae (strain ATCC 700825 / FA 1090).